The sequence spans 456 residues: MAVAISGSSLISSTLQHYNNRIYIRDYPIPCHSSNPICNSFNFKRRSFSPSSPKFNDHVVNPSSSYLSSKLSPIRTHSSFAACGCSWIQDNSMVHDYATTTNGTSKRCSALPTTNTVDVSSVSDLFEFICSGPLVNKIGITPQRVGQSIDKWLLYGSQLCRLFQLNELKLTIPQKARLYHYYIPVFIWCEDQIALHNSKFKDGDDVPPLVIGFSAPQGCGKTTLVFALDYLFKTTKKKSATISVDDFYLTAEGQAELRKKNPGNALLEYRGNAGSHDLKLSVETLEALSKLTKEGLKMKVPRYNKSAYSGRGDRADSSTWPEVEGPLSVILFEGWMLGFKPLPADVVKAVDPQLEVVNKNLEAYYDAWDKYIDAWVVIKIQDPSYVYRWRLQAEIAMRQDGQAGMSDEEVNDFVSRYLPAYKAYLPTLYAEGPSGSDPDRVLAIDIDEERNPILAN.

A chloroplast-targeting transit peptide spans 1 to 63 (MAVAISGSSL…KFNDHVVNPS (63 aa)). 215-222 (APQGCGKT) provides a ligand contact to ATP.

It belongs to the GLYK kinase family.

The protein localises to the plastid. The protein resides in the chloroplast. It is found in the cytoplasm. The enzyme catalyses (R)-glycerate + ATP = (2R)-3-phosphoglycerate + ADP + H(+). Its pathway is photosynthesis; photorespiration; 3-phospho-D-glycerate from glycine: step 4/4. In terms of biological role, catalyzes the concluding reaction of the photorespiratory C2 cycle, an indispensable ancillary metabolic pathway to the photosynthetic C3 cycle that enables land plants to grow in an oxygen-containing atmosphere. Functionally, cytoplasmic D-glycerate 3-kinase that constitutes a photorespiratory bypass that alleviates fluctuating light-induced photoinhibition. This chain is D-glycerate 3-kinase, chloroplastic, found in Arabidopsis thaliana (Mouse-ear cress).